Consider the following 83-residue polypeptide: Apolipoprotein C-I, basic form (83 aa).

Residues 1–26 (MRLFLSLPVLVVVLSMVLEGPAPVQG) form the signal peptide.

The protein belongs to the apolipoprotein C1 family.

It is found in the secreted. Inhibitor of lipoprotein binding to the low density lipoprotein (LDL) receptor, LDL receptor-related protein, and very low density lipoprotein (VLDL) receptor. Associates with high density lipoproteins (HDL) and the triacylglycerol-rich lipoproteins in the plasma and makes up about 10% of the protein of the VLDL and 2% of that of HDL. Appears to interfere directly with fatty acid uptake and is also the major plasma inhibitor of cholesteryl ester transfer protein (CETP). Binds free fatty acids and reduces their intracellular esterification. Modulates the interaction of APOE with beta-migrating VLDL and inhibits binding of beta-VLDL to the LDL receptor-related protein. The polypeptide is Apolipoprotein C-I, basic form (APOC1) (Papio anubis (Olive baboon)).